Reading from the N-terminus, the 245-residue chain is Polyhedrin (245 aa).

The protein belongs to the polyhedrin family.

Functionally, major component of the virus occlusion bodies, which are large proteinaceous structures (polyhedra), that protect the virus from the outside environment for extended periods until they are ingested by insect larvae. This Lepidoptera (butterflies and moths) protein is Polyhedrin.